A 73-amino-acid chain; its full sequence is Exodeoxyribonuclease 7 small subunit (73 aa).

This sequence belongs to the XseB family. As to quaternary structure, heterooligomer composed of large and small subunits.

It localises to the cytoplasm. The enzyme catalyses Exonucleolytic cleavage in either 5'- to 3'- or 3'- to 5'-direction to yield nucleoside 5'-phosphates.. In terms of biological role, bidirectionally degrades single-stranded DNA into large acid-insoluble oligonucleotides, which are then degraded further into small acid-soluble oligonucleotides. The protein is Exodeoxyribonuclease 7 small subunit of Streptococcus mutans serotype c (strain ATCC 700610 / UA159).